Reading from the N-terminus, the 513-residue chain is ATP synthase subunit alpha (513 aa).

169–176 contacts ATP; that stretch reads GDRQTGKT.

Belongs to the ATPase alpha/beta chains family. In terms of assembly, F-type ATPases have 2 components, CF(1) - the catalytic core - and CF(0) - the membrane proton channel. CF(1) has five subunits: alpha(3), beta(3), gamma(1), delta(1), epsilon(1). CF(0) has three main subunits: a(1), b(2) and c(9-12). The alpha and beta chains form an alternating ring which encloses part of the gamma chain. CF(1) is attached to CF(0) by a central stalk formed by the gamma and epsilon chains, while a peripheral stalk is formed by the delta and b chains.

Its subcellular location is the cell inner membrane. It catalyses the reaction ATP + H2O + 4 H(+)(in) = ADP + phosphate + 5 H(+)(out). Its function is as follows. Produces ATP from ADP in the presence of a proton gradient across the membrane. The alpha chain is a regulatory subunit. This chain is ATP synthase subunit alpha, found in Dichelobacter nodosus (strain VCS1703A).